Here is a 341-residue protein sequence, read N- to C-terminus: Queuosine 5'-phosphate N-glycosylase/hydrolase (341 aa).

At methionine 1 the chain carries N-acetylmethionine. Queuine is bound by residues histidine 53, phenylalanine 237, aspartate 239, aspartate 314, tyrosine 315, and aspartate 319. Aspartate 239 acts as the Nucleophile or transition state stabilizer in catalysis.

The protein belongs to the QNG1 protein family.

It carries out the reaction queuosine 5'-phosphate + H2O = queuine + D-ribose 5-phosphate. Catalyzes the hydrolysis of queuosine 5'-phosphate, releasing the nucleobase queuine (q). Is required for salvage of queuine from exogenous queuosine (Q) that is imported and then converted to queuosine 5'-phosphate intracellularly. The chain is Queuosine 5'-phosphate N-glycosylase/hydrolase from Bos taurus (Bovine).